Consider the following 435-residue polypeptide: Trigger factor (435 aa).

The region spanning 163 to 248 (GDRVTIDFEG…LTRIEAQNLP (86 aa)) is the PPIase FKBP-type domain.

It belongs to the FKBP-type PPIase family. Tig subfamily.

The protein localises to the cytoplasm. The catalysed reaction is [protein]-peptidylproline (omega=180) = [protein]-peptidylproline (omega=0). Its function is as follows. Involved in protein export. Acts as a chaperone by maintaining the newly synthesized protein in an open conformation. Functions as a peptidyl-prolyl cis-trans isomerase. In Leptothrix cholodnii (strain ATCC 51168 / LMG 8142 / SP-6) (Leptothrix discophora (strain SP-6)), this protein is Trigger factor.